The following is a 329-amino-acid chain: Succinylglutamate desuccinylase (329 aa).

Residues histidine 53, glutamate 56, and histidine 148 each contribute to the Zn(2+) site. Glutamate 211 is an active-site residue.

It belongs to the AspA/AstE family. Succinylglutamate desuccinylase subfamily. The cofactor is Zn(2+).

The catalysed reaction is N-succinyl-L-glutamate + H2O = L-glutamate + succinate. It participates in amino-acid degradation; L-arginine degradation via AST pathway; L-glutamate and succinate from L-arginine: step 5/5. In terms of biological role, transforms N(2)-succinylglutamate into succinate and glutamate. The polypeptide is Succinylglutamate desuccinylase (Erwinia tasmaniensis (strain DSM 17950 / CFBP 7177 / CIP 109463 / NCPPB 4357 / Et1/99)).